Reading from the N-terminus, the 538-residue chain is Cytochrome P450 monooxygenase okaG (538 aa).

The helical transmembrane segment at 3–23 (LISPLAAVLSAMAIVLGLLFF) threads the bilayer. Residue Cys-484 coordinates heme.

This sequence belongs to the cytochrome P450 family. Heme serves as cofactor.

It is found in the membrane. It carries out the reaction 12-deshydroxyl okaramine E + 2 reduced [NADPH--hemoprotein reductase] + 2 O2 = 3-desmethyl okaramine B + 2 oxidized [NADPH--hemoprotein reductase] + 2 H2O + 2 H(+). The protein operates within alkaloid biosynthesis. Functionally, nonribosomal peptide synthetase; part of the gene cluster that mediates the biosynthesis of okaramine B, a prenylated indole alkaloid that possesses an unusual octacyclic ring system, including a four-membered azetidine ring and an eight-membered azocine ring, and that exhibits insecticidal activity against silkworm larvae. Within the pathway, okaG acts as a 2,3-diol synthase that installs 2,3-diol on the okaramine scaffold to convert 12-deshydroxyl okaramine E into 3-desmethyl okaramine B. OkaG is also able to produce use okaramine E and produce okaramine D with the help of the methyltransferase okaF. The biosynthesis begins with the NRPS okaA that condenses two tryptophan molecules into cyclo(L-Trp-L-Trp). Prenylation by the prenyltransferase okaC then leads to the formation of cyclo(N8-(alpha,alpha-dimethylallyl)-L-Trp-6a-(alpha,alpha-dime-thylallyl)-L-Trp). This is followed by indole 2,3-epoxidation by the FAD-dependent monooxygenase okaB to facilitate the formation of the hexahydropyrrolo[2,3-b]indole (HPI) moiety of okaramine C. The cytochrome P450 monooxygenase okaD then likely catalyzes formation of the eight-membered ring of okaramine A. The dioxygenase okaE further forms the unusual 2-dimethyl-3-methyl-azetidine ring to yield 12-deshydroxyl okaramine E, as well as the hydroxylation of 12-deshydroxyl okaramine E to produce okaramine E. The cytochrome P450 monoxygenase okaG converts 12-deshydroxyl okaramine E into 3-desmethyl okaramine B which is further methylated by the methyltransferase okaF into okaramine B. In a shunt pathway, okaG and okaF together are also able to convert okaramine E into okaramine D. Okaramine H is produced by nonenzymatic conversion from okaramine A. The protein is Cytochrome P450 monooxygenase okaG of Penicillium ochrochloron.